A 398-amino-acid polypeptide reads, in one-letter code: Aspartate aminotransferase (398 aa).

Residues Gly-36, Trp-132, and Asn-185 each coordinate L-aspartate. Position 248 is an N6-(pyridoxal phosphate)lysine (Lys-248). Residue Arg-376 coordinates L-aspartate.

Belongs to the class-I pyridoxal-phosphate-dependent aminotransferase family. Homodimer. Pyridoxal 5'-phosphate serves as cofactor.

The protein resides in the cytoplasm. It carries out the reaction L-aspartate + 2-oxoglutarate = oxaloacetate + L-glutamate. This chain is Aspartate aminotransferase (aspC), found in Pseudomonas aeruginosa (strain ATCC 15692 / DSM 22644 / CIP 104116 / JCM 14847 / LMG 12228 / 1C / PRS 101 / PAO1).